Here is a 136-residue protein sequence, read N- to C-terminus: DNA-binding protein H-NS (136 aa).

Residues 13-67 (TLRAQARECTLETLEEMLEKLEVVVNERREEDSQAQAEIEERTRKLQQYREMLIA) are a coiled coil. The DNA-binding element occupies 113–118 (QGRTPA).

Belongs to the histone-like protein H-NS family. In terms of assembly, interacts with YmoA in the absence of DNA. Homodimer that oligomerizes on DNA into higher-order complexes that form bridges between disparate regions of DNA compacting it. Interacts with YmoA.

It is found in the cytoplasm. It localises to the nucleoid. In terms of biological role, a DNA-binding protein implicated in transcriptional repression and chromosome organization and compaction. Binds nucleation sites in AT-rich DNA and bridges them, forming higher-order nucleoprotein complexes and condensing the chromosome. As many horizontally transferred genes are AT-rich, it plays a central role in silencing foreign genes. A subset of genes are repressed by H-NS in association with YmoA. Complements a number of hns deficiencies in E.coli; represses the bgl operon, represses hemolysin expression. This is DNA-binding protein H-NS from Yersinia enterocolitica.